Consider the following 487-residue polypeptide: Glutamyl-tRNA(Gln) amidotransferase subunit A (487 aa).

Catalysis depends on charge relay system residues lysine 77 and serine 152. The active-site Acyl-ester intermediate is serine 176.

This sequence belongs to the amidase family. GatA subfamily. In terms of assembly, heterotrimer of A, B and C subunits.

The catalysed reaction is L-glutamyl-tRNA(Gln) + L-glutamine + ATP + H2O = L-glutaminyl-tRNA(Gln) + L-glutamate + ADP + phosphate + H(+). Allows the formation of correctly charged Gln-tRNA(Gln) through the transamidation of misacylated Glu-tRNA(Gln) in organisms which lack glutaminyl-tRNA synthetase. The reaction takes place in the presence of glutamine and ATP through an activated gamma-phospho-Glu-tRNA(Gln). This is Glutamyl-tRNA(Gln) amidotransferase subunit A from Limosilactobacillus fermentum (strain NBRC 3956 / LMG 18251) (Lactobacillus fermentum).